The sequence spans 483 residues: Probable cytosol aminopeptidase (483 aa).

Positions 252 and 257 each coordinate Mn(2+). Residue lysine 264 is part of the active site. Residues aspartate 275, aspartate 334, and glutamate 336 each contribute to the Mn(2+) site. The active site involves arginine 338.

Belongs to the peptidase M17 family. It depends on Mn(2+) as a cofactor.

It localises to the cytoplasm. The catalysed reaction is Release of an N-terminal amino acid, Xaa-|-Yaa-, in which Xaa is preferably Leu, but may be other amino acids including Pro although not Arg or Lys, and Yaa may be Pro. Amino acid amides and methyl esters are also readily hydrolyzed, but rates on arylamides are exceedingly low.. The enzyme catalyses Release of an N-terminal amino acid, preferentially leucine, but not glutamic or aspartic acids.. Functionally, presumably involved in the processing and regular turnover of intracellular proteins. Catalyzes the removal of unsubstituted N-terminal amino acids from various peptides. This is Probable cytosol aminopeptidase from Legionella pneumophila (strain Paris).